The sequence spans 527 residues: Peptide chain release factor 3 (527 aa).

In terms of domain architecture, tr-type G spans 10-278 (DRRRTFAIIS…TFVENAPAPL (269 aa)). Residues 19–26 (SHPDAGKT), 87–91 (DTPGH), and 141–144 (NKLD) contribute to the GTP site.

This sequence belongs to the TRAFAC class translation factor GTPase superfamily. Classic translation factor GTPase family. PrfC subfamily.

It localises to the cytoplasm. Increases the formation of ribosomal termination complexes and stimulates activities of RF-1 and RF-2. It binds guanine nucleotides and has strong preference for UGA stop codons. It may interact directly with the ribosome. The stimulation of RF-1 and RF-2 is significantly reduced by GTP and GDP, but not by GMP. In Geobacter metallireducens (strain ATCC 53774 / DSM 7210 / GS-15), this protein is Peptide chain release factor 3.